The sequence spans 156 residues: Aspercryptin biosynthesis cluster protein B (156 aa).

Positions 1 to 39 (MRMANRIGAGRKSALQLSHLRTRLTSSAAAVATAPTLDP) are cleaved as a signal peptide.

This sequence belongs to the YciI family.

It functions in the pathway secondary metabolite biosynthesis. Its function is as follows. Part of the gene cluster that mediates the biosynthesis of aspercryptins, linear lipopeptides built from six amino acids including 2 highly unusual and nonproteogenic amino acids, 2-amino-octanoic acid (2aoa) and 2-amino-dodecanol (2adol). The core structure of aspercryptins is as follows: Ser/Ala-Thr-Ile/Val-2aoa-Aasn-2adol. The first step of aspercryptin biosynthesis is the generation of the fatty acid precursors, octanoic and dodecanoic acids, by the FAS subunits atnF and atnM. The fatty acid precursors are likely transformed into the corresponding alpha-amino fatty acids in three steps. First, they are hydroxylated by the cytochrome P450 monooxygenase atnE, then oxidized to the corresponding alpha-keto acids by the NAD(P)-dependent oxidoreductase atnD, and finally converted to the alpha-amino fatty acids by the PLP-dependent aminotransferases atnH or atnJ. the alpha-amino fatty acids, 2-amino-octanoic and 2-amino-dodecanoic acids, are recognized, activated, and covalently tethered to the NRPS atnA by its fourth and sixth adenylation domains. The second module of atnA is the Thr module and contains an epimerase (E) domain responsible for the epimerization of Thr to D-allo-Thr. Additionally, despite atnA having only one epimerase domain, the first amino acid of aspercryptin A1 is D-Ser, suggesting that serine is either loaded directly as D-Ser on the first module or that the epimerase domain in the threonine module epimerizes both L-Ser and L-Thr. After condensation of the hexapeptide of aspercryptin, the C-terminal reductase (TE) domain might be involved in the reductive release and production of the aldehyde hexapeptide. Further reduction would generate aspercryptins. The variety of aspercryptins produced reflects the flexibility of the atnA NRPS, allowing incorporation of alanine instead of serine, valine for isoleucine, and a C10 fatty amino alcohol instead of the C12 version. AtnB seems to be involved in the selectivity for Ile versus Val by the third module. Moreover, type B, C and D aspercryptins have an additional N-terminal cichorine, acetyl and propionyl group respectively. This Emericella nidulans (strain FGSC A4 / ATCC 38163 / CBS 112.46 / NRRL 194 / M139) (Aspergillus nidulans) protein is Aspercryptin biosynthesis cluster protein B.